A 555-amino-acid polypeptide reads, in one-letter code: TBCC domain-containing protein 1 (555 aa).

The C-CAP/cofactor C-like domain maps to 302 to 433 (PEVSPMVIMS…LEDHMAQVGL (132 aa)).

This sequence belongs to the TBCC family.

The protein localises to the cytoplasm. It is found in the cytoskeleton. It localises to the microtubule organizing center. Its subcellular location is the centrosome. The protein resides in the spindle pole. May play a role in the regulation of centrosome and Golgi apparatus positioning. This is TBCC domain-containing protein 1 (TBCCD1) from Gallus gallus (Chicken).